Reading from the N-terminus, the 134-residue chain is Putative nickel-responsive regulator (134 aa).

Ni(2+) contacts are provided by His78, His89, His91, and Cys97.

It belongs to the transcriptional regulatory CopG/NikR family. Requires Ni(2+) as cofactor.

Transcriptional regulator. This is Putative nickel-responsive regulator from Chlorobaculum tepidum (strain ATCC 49652 / DSM 12025 / NBRC 103806 / TLS) (Chlorobium tepidum).